A 510-amino-acid polypeptide reads, in one-letter code: Bifunctional purine biosynthesis protein PurH (510 aa).

One can recognise an MGS-like domain in the interval 1–143 (MTKRALISVS…KNHDAVLVLV (143 aa)).

Belongs to the PurH family.

It carries out the reaction (6R)-10-formyltetrahydrofolate + 5-amino-1-(5-phospho-beta-D-ribosyl)imidazole-4-carboxamide = 5-formamido-1-(5-phospho-D-ribosyl)imidazole-4-carboxamide + (6S)-5,6,7,8-tetrahydrofolate. The enzyme catalyses IMP + H2O = 5-formamido-1-(5-phospho-D-ribosyl)imidazole-4-carboxamide. The protein operates within purine metabolism; IMP biosynthesis via de novo pathway; 5-formamido-1-(5-phospho-D-ribosyl)imidazole-4-carboxamide from 5-amino-1-(5-phospho-D-ribosyl)imidazole-4-carboxamide (10-formyl THF route): step 1/1. It participates in purine metabolism; IMP biosynthesis via de novo pathway; IMP from 5-formamido-1-(5-phospho-D-ribosyl)imidazole-4-carboxamide: step 1/1. The polypeptide is Bifunctional purine biosynthesis protein PurH (Deinococcus radiodurans (strain ATCC 13939 / DSM 20539 / JCM 16871 / CCUG 27074 / LMG 4051 / NBRC 15346 / NCIMB 9279 / VKM B-1422 / R1)).